The following is a 464-amino-acid chain: Maturase K (464 aa).

The protein belongs to the intron maturase 2 family. MatK subfamily.

The protein resides in the plastid. The protein localises to the chloroplast. Its function is as follows. Usually encoded in the trnK tRNA gene intron. Probably assists in splicing its own and other chloroplast group II introns. The protein is Maturase K of Castanea crenata (Japanese chestnut).